Here is a 295-residue protein sequence, read N- to C-terminus: 2-dehydropantoate 2-reductase (295 aa).

Residues 9 to 14 (GPGAVG), Asn-100, and Ala-126 each bind NADP(+). Asn-100 is a binding site for substrate. Catalysis depends on Lys-177, which acts as the Proton donor. Asn-181 and Ser-246 together coordinate substrate. Glu-258 contributes to the NADP(+) binding site.

Belongs to the ketopantoate reductase family.

The protein resides in the cytoplasm. The enzyme catalyses (R)-pantoate + NADP(+) = 2-dehydropantoate + NADPH + H(+). Its pathway is cofactor biosynthesis; (R)-pantothenate biosynthesis; (R)-pantoate from 3-methyl-2-oxobutanoate: step 2/2. Its function is as follows. Catalyzes the NADPH-dependent reduction of ketopantoate into pantoic acid. The protein is 2-dehydropantoate 2-reductase of Mycobacterium tuberculosis (strain CDC 1551 / Oshkosh).